The following is a 293-amino-acid chain: Fructose-bisphosphate aldolase (293 aa).

S50 is a binding site for D-glyceraldehyde 3-phosphate. Catalysis depends on D85, which acts as the Proton donor. Positions 86, 106, 136, and 178 each coordinate Zn(2+). G179 is a dihydroxyacetone phosphate binding site. H208 serves as a coordination point for Zn(2+). Dihydroxyacetone phosphate-binding positions include 209–211 and 230–233; these read GGS and NVNT.

The protein belongs to the class II fructose-bisphosphate aldolase family. Zn(2+) is required as a cofactor.

The catalysed reaction is beta-D-fructose 1,6-bisphosphate = D-glyceraldehyde 3-phosphate + dihydroxyacetone phosphate. The protein operates within carbohydrate degradation; glycolysis; D-glyceraldehyde 3-phosphate and glycerone phosphate from D-glucose: step 4/4. In terms of biological role, catalyzes the aldol condensation of dihydroxyacetone phosphate (DHAP or glycerone-phosphate) with glyceraldehyde 3-phosphate (G3P) to form fructose 1,6-bisphosphate (FBP) in gluconeogenesis and the reverse reaction in glycolysis. The chain is Fructose-bisphosphate aldolase (fba) from Streptococcus pneumoniae serotype 4 (strain ATCC BAA-334 / TIGR4).